Reading from the N-terminus, the 325-residue chain is MATH domain and coiled-coil domain-containing protein At3g58430 (325 aa).

The MATH domain maps to 6 to 131; it reads HKKFCWIIKN…KGDFKIIAEV (126 aa). The stretch at 258 to 306 forms a coiled coil; sequence FKVDWLEKKLDQVKDKKEREQSGLARLHELEEYLLKLKQKCSNLDLLVE.

The sequence is that of MATH domain and coiled-coil domain-containing protein At3g58430 from Arabidopsis thaliana (Mouse-ear cress).